The primary structure comprises 166 residues: Interferon gamma (166 aa).

The N-terminal stretch at 1-23 is a signal peptide; sequence MNYTSYILAFQLCVILCSSGCNC. Pyrrolidone carboxylic acid is present on glutamine 24. N-linked (GlcNAc...) asparagine glycosylation is found at asparagine 39 and asparagine 106.

Belongs to the type II (or gamma) interferon family. As to quaternary structure, homodimer. Interacts with IFNGR1 (via extracellular domain); this interaction promotes IFNGR1 dimerization. Released primarily from activated T lymphocytes.

The protein resides in the secreted. In terms of biological role, type II interferon produced by immune cells such as T-cells and NK cells that plays crucial roles in antimicrobial, antiviral, and antitumor responses by activating effector immune cells and enhancing antigen presentation. Primarily signals through the JAK-STAT pathway after interaction with its receptor IFNGR1 to affect gene regulation. Upon IFNG binding, IFNGR1 intracellular domain opens out to allow association of downstream signaling components JAK2, JAK1 and STAT1, leading to STAT1 activation, nuclear translocation and transcription of IFNG-regulated genes. Many of the induced genes are transcription factors such as IRF1 that are able to further drive regulation of a next wave of transcription. Plays a role in class I antigen presentation pathway by inducing a replacement of catalytic proteasome subunits with immunoproteasome subunits. In turn, increases the quantity, quality, and repertoire of peptides for class I MHC loading. Increases the efficiency of peptide generation also by inducing the expression of activator PA28 that associates with the proteasome and alters its proteolytic cleavage preference. Up-regulates as well MHC II complexes on the cell surface by promoting expression of several key molecules such as cathepsins B/CTSB, H/CTSH, and L/CTSL. Participates in the regulation of hematopoietic stem cells during development and under homeostatic conditions by affecting their development, quiescence, and differentiation. This chain is Interferon gamma (IFNG), found in Canis lupus familiaris (Dog).